The primary structure comprises 276 residues: Large ribosomal subunit protein uL2c (276 aa).

Residues 225-276 (AMNPVDHPHGGGEGRTPIGRKKPVTPWGYSALGKKSRKRNRYSDASILRRRE) form a disordered region.

Belongs to the universal ribosomal protein uL2 family. Part of the 50S ribosomal subunit.

Its subcellular location is the plastid. It is found in the chloroplast. This chain is Large ribosomal subunit protein uL2c (rpl2), found in Pinus koraiensis (Korean pine).